The chain runs to 644 residues: Exoribonuclease 2 (644 aa).

Positions 189–516 constitute an RNB domain; sequence RQDLTALNFV…NHRLLKAVIK (328 aa). Residues 561 to 643 enclose the S1 motif domain; the sequence is NTRFAAEIID…ETRSIIARPA (83 aa).

It belongs to the RNR ribonuclease family. RNase II subfamily.

The protein localises to the cytoplasm. The catalysed reaction is Exonucleolytic cleavage in the 3'- to 5'-direction to yield nucleoside 5'-phosphates.. Its function is as follows. Involved in mRNA degradation. Hydrolyzes single-stranded polyribonucleotides processively in the 3' to 5' direction. The sequence is that of Exoribonuclease 2 from Salmonella newport (strain SL254).